Consider the following 912-residue polypeptide: DNA (cytosine-5)-methyltransferase 3A (912 aa).

2 disordered regions span residues 1-178 (MPAM…GWES) and 221-286 (IAGM…EYED). A compositionally biased stretch (basic and acidic residues) spans 17–40 (AEREEDRKDGEEQEEPRGKEERQE). Over residues 47–57 (KVGRPGRKRKH) the composition is skewed to basic residues. Positions 74–83 (KSPSMAQDSG) are enriched in polar residues. A Phosphoserine modification is found at serine 105. The segment covering 113–128 (GAPAEGEGAAETLPEA) has biased composition (low complexity). Threonine 124 is modified (phosphothreonine). Basic and acidic residues predominate over residues 149–167 (AGKEQKETNIESMKMEGSR). Lysine 162 is covalently cross-linked (Glycyl lysine isopeptide (Lys-Gly) (interchain with G-Cter in SUMO2)). Arginine 171 bears the Omega-N-methylarginine mark. The interval 199-403 (SKRKRDEWLA…DTAKAVEVQN (205 aa)) is interaction with DNMT1 and DNMT3B. Residues serine 243 and serine 255 each carry the phosphoserine modification. The segment covering 246-260 (AVQQPTDPASPTVAT) has biased composition (polar residues). Phosphothreonine is present on threonine 261. Position 267 is a phosphoserine (serine 267). Residues 269–279 (AGDKNATKAGD) are compositionally biased toward basic and acidic residues. The PWWP domain maps to 292–350 (IGELVWGKLRGFSWWPGRIVSWWMTGRSRAAEGTRWVMWFGDGKFSVVCVEKLMPLSSF). Residues serine 390 and serine 393 each carry the phosphoserine modification. A disordered region spans residues 447 to 466 (AYAPPPPAKKPRKSTAEKPK). One can recognise an ADD domain in the interval 482–614 (EVRQKCRNIE…LQMFFANNHD (133 aa)). A GATA-type; atypical zinc finger spans residues 493–523 (ICISCGSLNVTLEHPLFVGGMCQNCKNCFLE). Positions 494–586 (CISCGSLNVT…KEDPWNCYMC (93 aa)) are interaction with the PRC2/EED-EZH2 complex. A PHD-type; atypical zinc finger spans residues 534-590 (QSYCTICCGGREVLMCGNNNCCRCFCVECVDLLVGPGAAQAAIKEDPWNCYMCGHKG). The SAM-dependent MTase C5-type domain occupies 634-912 (IRVLSLFDGI…APLKEYFACV (279 aa)). S-adenosyl-L-methionine-binding positions include 641-645 (DGIAT), glutamate 664, and 686-688 (DVR). The active site involves cysteine 710. The residue at position 710 (cysteine 710) is an S-methylcysteine; by autocatalysis. S-adenosyl-L-methionine is bound at residue 891-893 (RSW).

It belongs to the class I-like SAM-binding methyltransferase superfamily. C5-methyltransferase family. Heterotetramer composed of 1 DNMT3A homodimer and 2 DNMT3L subunits (DNMT3L-DNMT3A-DNMT3A-DNMT3L). Interacts with UBC9, PIAS1 and PIAS2. Binds the ZBTB18 transcriptional repressor. Interacts with SETDB1. Associates with HDAC1 through its ADD domain. Interacts with UHRF1. Interacts with DNMT1 and DNMT3B. Interacts with the PRC2/EED-EZH2 complex. Interacts with MPHOSPH8. Interacts with histone H3 that is not methylated at 'Lys-4' (H3K4). Interacts with SPOCD1. Interacts with ZNF263; recruited to the SIX3 promoter along with other proteins involved in chromatin modification and transcriptional corepression where it contributes to transcriptional repression. Post-translationally, sumoylated; sumoylation disrupts the ability to interact with histone deacetylases (HDAC1 and HDAC2) and repress transcription. Auto-methylated at Cys-710: auto-methylation takes place in absence of DNA substrate and inactivates the DNA methyltransferase activity. Inactivation by auto-methylation may be used to inactivate unused DNA methyltransferases in the cell. In terms of tissue distribution, highly expressed in fetal tissues, skeletal muscle, heart, peripheral blood mononuclear cells, kidney, and at lower levels in placenta, brain, liver, colon, spleen, small intestine and lung.

The protein localises to the nucleus. Its subcellular location is the chromosome. It localises to the cytoplasm. The enzyme catalyses a 2'-deoxycytidine in DNA + S-adenosyl-L-methionine = a 5-methyl-2'-deoxycytidine in DNA + S-adenosyl-L-homocysteine + H(+). It carries out the reaction L-cysteinyl-[protein] + S-adenosyl-L-methionine = S-methyl-L-cysteinyl-[protein] + S-adenosyl-L-homocysteine + H(+). Activated by binding to the regulatory factor DNMT3L. Auto-methylation at Cys-710 in absence of DNA inactivates the DNA methyltransferase activity. In terms of biological role, required for genome-wide de novo methylation and is essential for the establishment of DNA methylation patterns during development. DNA methylation is coordinated with methylation of histones. It modifies DNA in a non-processive manner and also methylates non-CpG sites. May preferentially methylate DNA linker between 2 nucleosomal cores and is inhibited by histone H1. Plays a role in paternal and maternal imprinting. Required for methylation of most imprinted loci in germ cells. Acts as a transcriptional corepressor for ZBTB18. Recruited to trimethylated 'Lys-36' of histone H3 (H3K36me3) sites. Can actively repress transcription through the recruitment of HDAC activity. Also has weak auto-methylation activity on Cys-710 in absence of DNA. This chain is DNA (cytosine-5)-methyltransferase 3A (DNMT3A), found in Homo sapiens (Human).